The primary structure comprises 301 residues: Pseudouridine-5'-phosphate glycosidase (301 aa).

Catalysis depends on E25, which acts as the Proton donor. Substrate contacts are provided by K86 and V106. D138 serves as a coordination point for Mn(2+). 140–142 (SAD) lines the substrate pocket. The active-site Nucleophile is K159.

Belongs to the pseudouridine-5'-phosphate glycosidase family. In terms of assembly, homotrimer. The cofactor is Mn(2+).

It catalyses the reaction D-ribose 5-phosphate + uracil = psi-UMP + H2O. Functionally, catalyzes the reversible cleavage of pseudouridine 5'-phosphate (PsiMP) to ribose 5-phosphate and uracil. Functions biologically in the cleavage direction, as part of a pseudouridine degradation pathway. The polypeptide is Pseudouridine-5'-phosphate glycosidase (Geobacillus kaustophilus (strain HTA426)).